A 143-amino-acid polypeptide reads, in one-letter code: uncharacterized protein (143 aa).

Residues 5-137 form the HTH marR-type domain; sequence DARLASDLSL…LRNAADLILE (133 aa). Positions 51 to 74 form a DNA-binding region, H-T-H motif; the sequence is PGALAIRERVRPPSMTRVIASLAD.

As to quaternary structure, homodimer.

This is an uncharacterized protein from Mycobacterium leprae (strain TN).